We begin with the raw amino-acid sequence, 507 residues long: DNA ligase B (507 aa).

A not required for adenylyltransferase activity, required for nick joining region spans residues 1-172 (MLLHDVAITS…AAAAGLSGAA (172 aa)). An ATP-binding site is contributed by Glu209. Residue Lys211 is the N6-AMP-lysine intermediate of the active site. The ATP site is built by Arg216, Arg231, Glu260, Phe300, Arg372, and Lys378.

Belongs to the ATP-dependent DNA ligase family. Monomer. Mg(2+) serves as cofactor.

It catalyses the reaction ATP + (deoxyribonucleotide)n-3'-hydroxyl + 5'-phospho-(deoxyribonucleotide)m = (deoxyribonucleotide)n+m + AMP + diphosphate.. Functionally, DNA ligase that seals nicks in double-stranded DNA during DNA replication, DNA recombination and DNA repair. The polypeptide is DNA ligase B (ligB) (Mycobacterium tuberculosis (strain ATCC 25618 / H37Rv)).